Consider the following 803-residue polypeptide: Volume-regulated anion channel subunit LRRC8C (803 aa).

Over 1 to 22 the chain is Cytoplasmic; sequence MIPVTEFRQFSEQQPAFRVLKP. A helical transmembrane segment spans residues 23–43; it reads WWDVFTDYLSVAMLMIGVFGC. At 44 to 125 the chain is on the extracellular side; it reads TLQVMQDKII…YERALHWYAK (82 aa). Disulfide bonds link Cys-54/Cys-308 and Cys-115/Cys-293. Residues Asn-64 and Asn-70 are each glycosylated (N-linked (GlcNAc...) asparagine). The helical transmembrane segment at 126-146 threads the bilayer; the sequence is YFPYLVLIHTLVFMLCSNFWF. At 147 to 266 the chain is on the cytoplasmic side; the sequence is KFPGSSSKIE…ILYAMYVRQT (120 aa). Positions 177–209 are disordered; that stretch reads EVSGEDSEEKDNRKNNMSRSNTTQSGPEGSLVN. Positions 191 to 209 are enriched in polar residues; that stretch reads NNMSRSNTTQSGPEGSLVN. A phosphoserine mark is found at Ser-212 and Ser-215. Residues 267–287 traverse the membrane as a helical segment; it reads VLKVIKFLIIIAYNSALVSKV. Residues 288-320 are Extracellular-facing; that stretch reads QFTVDCNVDIQDMTGYKNFSCNHTMAHLFSKLS. The chain crosses the membrane as a helical span at residues 321 to 341; the sequence is FCYLCFVSIYGLTCLYTLYWL. Residues 342–803 lie on the Cytoplasmic side of the membrane; that stretch reads FYRSLKEYSF…SDVREQMKTE (462 aa). LRR repeat units follow at residues 397–419, 420–443, 446–465, 468–490, 492–513, 515–536, 543–563, 566–586, 590–611, 613–634, 638–659, 661–682, 684–705, 707–728, 730–751, 753–774, and 776–799; these read ENKL…QKLQ, TNAH…VFEI, LQSL…TIAQ, NLQE…SFLK, NLKV…MYGL, NLEE…VTLE, SLKI…VVDV, HLQK…NNLK, NLTE…VFSL, SLQE…VSFQ, KLTV…IKKL, SLER…LFLC, KIRY…IGVL, SLQY…LYFC, KLKT…IGNL, FLSY…LGDC, and ALKR…VREQ.

The protein belongs to the LRRC8 family. In terms of assembly, heterohexamer; oligomerizes with other LRRC8 proteins (LRRC8A, LRRC8B, LRRC8D and/or LRRC8E) to form a heterohexamer. Homoheptamer; inactive, likely because it is not targeted to the plasma membrane in the absence of LRRC8A. In vivo, the subunit composition may depend primarily on expression levels, and heterooligomeric channels containing various proportions of the different LRRC8 proteins may coexist.

It localises to the cell membrane. The protein localises to the endoplasmic reticulum membrane. The catalysed reaction is chloride(in) = chloride(out). It catalyses the reaction iodide(out) = iodide(in). The enzyme catalyses taurine(out) = taurine(in). It carries out the reaction 2',3'-cGAMP(out) = 2',3'-cGAMP(in). Non-essential component of the volume-regulated anion channel (VRAC, also named VSOAC channel), an anion channel required to maintain a constant cell volume in response to extracellular or intracellular osmotic changes. The VRAC channel conducts iodide better than chloride and can also conduct organic osmolytes like taurine. Plays a redundant role in the efflux of amino acids, such as aspartate and glutamate, in response to osmotic stress. The VRAC channel also mediates transport of immunoreactive cyclic dinucleotide GMP-AMP (2'-3'-cGAMP), an immune messenger produced in response to DNA virus in the cytosol. Channel activity requires LRRC8A plus at least one other family member (LRRC8B, LRRC8C, LRRC8D or LRRC8E); channel characteristics depend on the precise subunit composition. The protein is Volume-regulated anion channel subunit LRRC8C of Bos taurus (Bovine).